Reading from the N-terminus, the 275-residue chain is tRNA (guanine-N(1)-)-methyltransferase (275 aa).

Residues Gly-139 and 159-164 (IGDYIL) contribute to the S-adenosyl-L-methionine site.

Belongs to the RNA methyltransferase TrmD family. As to quaternary structure, homodimer.

The protein localises to the cytoplasm. It catalyses the reaction guanosine(37) in tRNA + S-adenosyl-L-methionine = N(1)-methylguanosine(37) in tRNA + S-adenosyl-L-homocysteine + H(+). Functionally, specifically methylates guanosine-37 in various tRNAs. This Lachnoclostridium phytofermentans (strain ATCC 700394 / DSM 18823 / ISDg) (Clostridium phytofermentans) protein is tRNA (guanine-N(1)-)-methyltransferase.